We begin with the raw amino-acid sequence, 623 residues long: Kelch repeat and BTB domain-containing protein 2 (623 aa).

Positions 31 to 98 constitute a BTB domain; that stretch reads TDIVLIVEGT…AYTGNLAMND (68 aa). The 97-residue stretch at 133–229 folds into the BACK domain; it reads CVRLLSFADL…IRIDALSEVT (97 aa). A Phosphoserine modification is found at serine 300. Kelch repeat units lie at residues 317-380, 381-429, 431-469, 470-529, and 535-581; these read DIYI…CCEG, HIYA…VVHD, IYVM…AFGD, KIFY…RAVV, and CVFM…DFRC.

In terms of assembly, component of the BCR(KBTBD2) E3 ubiquitin ligase complex, at least composed of CUL3, KBTBD2 and RBX1. Interacts (via the BTB domain) with CUL3.

Its pathway is protein modification; protein ubiquitination. Functionally, substrate-specific adapter of a BCR (BTB-CUL3-RBX1) E3 ubiquitin ligase complex that acts as a regulator of the insulin signaling pathway, modulating insulin sensitivity by limiting PIK3R1/p85alpha abundance in adipocytes. Targets PIK3R1, the regulatory subunit of phosphatidylinositol 3-kinase (PI3K), for 'Lys-48'-linked polyubiquitination and proteasome-mediated degradation. This chain is Kelch repeat and BTB domain-containing protein 2 (KBTBD2), found in Pongo abelii (Sumatran orangutan).